The chain runs to 887 residues: Pyruvate dehydrogenase E1 component (887 aa).

As to quaternary structure, homodimer. Part of the PDH complex, consisting of multiple copies of pyruvate dehydrogenase (E1), dihydrolipoamide acetyltransferase (E2) and lipoamide dehydrogenase (E3). It depends on thiamine diphosphate as a cofactor.

The enzyme catalyses N(6)-[(R)-lipoyl]-L-lysyl-[protein] + pyruvate + H(+) = N(6)-[(R)-S(8)-acetyldihydrolipoyl]-L-lysyl-[protein] + CO2. In terms of biological role, component of the pyruvate dehydrogenase (PDH) complex, that catalyzes the overall conversion of pyruvate to acetyl-CoA and CO(2). The chain is Pyruvate dehydrogenase E1 component (aceE) from Buchnera aphidicola subsp. Acyrthosiphon pisum (strain APS) (Acyrthosiphon pisum symbiotic bacterium).